A 197-amino-acid polypeptide reads, in one-letter code: Predicted GPI-anchored protein 34 (197 aa).

Residues 1-20 (MKFTSLICSSILLIIPTVMA) form the signal peptide. N-linked (GlcNAc...) asparagine glycans are attached at residues N110, N114, and N152. G169 carries the GPI-anchor amidated glycine lipid modification. Positions 170–197 (AAAMAGPVPILTNSIFTAGLLALAAVLL) are cleaved as a propeptide — removed in mature form.

It is found in the cell membrane. In terms of biological role, predicted GPI-anchored protein which may have a role during host infection. In Candida albicans (strain SC5314 / ATCC MYA-2876) (Yeast), this protein is Predicted GPI-anchored protein 34 (PGA34).